The primary structure comprises 280 residues: Hydroxyethylthiazole kinase (280 aa).

Position 58 (M58) interacts with substrate. Residue R129 coordinates ATP. A206 contributes to the substrate binding site.

It belongs to the Thz kinase family. Mg(2+) serves as cofactor.

The catalysed reaction is 5-(2-hydroxyethyl)-4-methylthiazole + ATP = 4-methyl-5-(2-phosphooxyethyl)-thiazole + ADP + H(+). It participates in cofactor biosynthesis; thiamine diphosphate biosynthesis; 4-methyl-5-(2-phosphoethyl)-thiazole from 5-(2-hydroxyethyl)-4-methylthiazole: step 1/1. Functionally, thiazole kinase involved in thiamine salvage pathway. The sequence is that of Hydroxyethylthiazole kinase (THIM) from Zea mays (Maize).